Consider the following 729-residue polypeptide: Fatty acid oxidation complex subunit alpha (729 aa).

The interval 1-189 is enoyl-CoA hydratase/isomerase; it reads MLYKGDTLYL…KIGLVDGVVK (189 aa). D296 lines the substrate pocket. The 3-hydroxyacyl-CoA dehydrogenase stretch occupies residues 311–729; that stretch reads ETPKQAAVLG…ARPVGDLKTA (419 aa). NAD(+) contacts are provided by residues M324, D343, 400-402, K407, and S429; that span reads VVE. Catalysis depends on H450, which acts as the For 3-hydroxyacyl-CoA dehydrogenase activity. N453 contributes to the NAD(+) binding site. Substrate-binding residues include N500 and Y660. The disordered stretch occupies residues 707 to 729; sequence ARHNEPYYPPVEPARPVGDLKTA.

In the N-terminal section; belongs to the enoyl-CoA hydratase/isomerase family. It in the C-terminal section; belongs to the 3-hydroxyacyl-CoA dehydrogenase family. As to quaternary structure, heterotetramer of two alpha chains (FadB) and two beta chains (FadA).

The enzyme catalyses a (3S)-3-hydroxyacyl-CoA + NAD(+) = a 3-oxoacyl-CoA + NADH + H(+). It carries out the reaction a (3S)-3-hydroxyacyl-CoA = a (2E)-enoyl-CoA + H2O. The catalysed reaction is a 4-saturated-(3S)-3-hydroxyacyl-CoA = a (3E)-enoyl-CoA + H2O. It catalyses the reaction (3S)-3-hydroxybutanoyl-CoA = (3R)-3-hydroxybutanoyl-CoA. The enzyme catalyses a (3Z)-enoyl-CoA = a 4-saturated (2E)-enoyl-CoA. It carries out the reaction a (3E)-enoyl-CoA = a 4-saturated (2E)-enoyl-CoA. Its pathway is lipid metabolism; fatty acid beta-oxidation. In terms of biological role, involved in the aerobic and anaerobic degradation of long-chain fatty acids via beta-oxidation cycle. Catalyzes the formation of 3-oxoacyl-CoA from enoyl-CoA via L-3-hydroxyacyl-CoA. It can also use D-3-hydroxyacyl-CoA and cis-3-enoyl-CoA as substrate. The protein is Fatty acid oxidation complex subunit alpha of Escherichia coli O6:K15:H31 (strain 536 / UPEC).